Consider the following 373-residue polypeptide: P2Y purinoceptor 1 (373 aa).

The Extracellular portion of the chain corresponds to 1–51 (MTEVPWSVVPNGTDAAFLAGLGSLWGNSTVASTAAVSSSFQCALTKTGFQF). Asn11 and Asn27 each carry an N-linked (GlcNAc...) asparagine glycan. Cystine bridges form between Cys42/Cys296 and Cys124/Cys202. Lys46 contacts ADP. The chain crosses the membrane as a helical span at residues 52 to 74 (YYLPAVYILVFIIGFLGNSVAIW). Residues 75 to 87 (MFVFHMKPWSGIS) lie on the Cytoplasmic side of the membrane. Residues 88–109 (VYMFNLALADFLYVLTLPALIF) form a helical membrane-spanning segment. Topologically, residues 110–125 (YYFNKTDWIFGDAMCK) are extracellular. Asn113 is a glycosylation site (N-linked (GlcNAc...) asparagine). The chain crosses the membrane as a helical span at residues 126-147 (LQRFIFHVNLYGSILFLTCISA). Residues 148–166 (HRYSGVVYPLKSLGRLKKK) lie on the Cytoplasmic side of the membrane. The chain crosses the membrane as a helical span at residues 167-188 (NAIYVSVLVWLIVVVAISPILF). Topologically, residues 189 to 214 (YSGTGTRKNKTVTCYDTTSNDYLRSY) are extracellular. N-linked (GlcNAc...) asparagine glycosylation occurs at Asn197. 203 to 205 (YDT) serves as a coordination point for ADP. The helical transmembrane segment at 215-237 (FIYSMCTTVAMFCIPLVLILGCY) threads the bilayer. Residues 238–260 (GLIVKALIYNDLDNSPLRRKSIY) lie on the Cytoplasmic side of the membrane. A helical membrane pass occupies residues 261 to 284 (LVIIVLTVFAVSYIPFHVMKTMNL). ADP-binding positions include 283–287 (NLRAR), 303–306 (YATY), and Arg310. At 285-303 (RARLDFQTPEMCDFNDRVY) the chain is on the extracellular side. The chain crosses the membrane as a helical span at residues 304 to 325 (ATYQVTRGLASLNSCVDPILYF). At 326–373 (LAGDTFRRRLSRATRKASRRSEANLQSKSEEMTLNILSEFKQNGDTSL) the chain is on the cytoplasmic side.

Belongs to the G-protein coupled receptor 1 family.

The protein resides in the cell membrane. In terms of biological role, receptor for extracellular adenine nucleotides such as ADP. In platelets, binding to ADP leads to mobilization of intracellular calcium ions via activation of phospholipase C, a change in platelet shape, and ultimately platelet aggregation. The chain is P2Y purinoceptor 1 (P2ry1) from Mus musculus (Mouse).